Here is a 153-residue protein sequence, read N- to C-terminus: Arginine repressor (153 aa).

Belongs to the ArgR family.

The protein resides in the cytoplasm. Its pathway is amino-acid biosynthesis; L-arginine biosynthesis [regulation]. Functionally, regulates arginine biosynthesis genes. The sequence is that of Arginine repressor from Syntrophomonas wolfei subsp. wolfei (strain DSM 2245B / Goettingen).